Here is a 285-residue protein sequence, read N- to C-terminus: SLAM family member 9 (285 aa).

An N-terminal signal peptide occupies residues 1 to 17; it reads MGALLWSLLLLLQEAKG. Residues 18-232 are Extracellular-facing; that stretch reads FSGDDEDPEE…YPEKPSMLCL (215 aa). The region spanning 25–126 is the Ig-like V-type domain; it reads PEEVIGVLQE…SHITKSYHLR (102 aa). Residues Asn37, Asn97, Asn141, Asn149, Asn175, and Asn206 are each glycosylated (N-linked (GlcNAc...) asparagine). The Ig-like C2-type domain occupies 134–213; that stretch reads PHITVNSNIS…VSNISSRRIS (80 aa). The cysteines at positions 154 and 198 are disulfide-linked. A helical transmembrane segment spans residues 233–253; the sequence is LVKSLFLLLLLAILTVGLCLF. At 254–285 the chain is on the cytoplasmic side; that stretch reads RAQKSYETPRVRKLKRNRIKLRKKGKSGPTPV.

The protein localises to the membrane. May play a role in the immune response. This chain is SLAM family member 9 (Slamf9), found in Mus musculus (Mouse).